A 1478-amino-acid polypeptide reads, in one-letter code: Fanconi anemia group D2 protein homolog (1478 aa).

The tract at residues 33 to 53 (NISVESSSGGSEENIPASQEH) is disordered. Residues 35-45 (SVESSSGGSEE) show a composition bias toward low complexity. K595 is covalently cross-linked (Glycyl lysine isopeptide (Lys-Gly) (interchain with G-Cter in ubiquitin)). 2 disordered regions span residues 896 to 918 (NQNQKRPGPKPAAKLNATLPEPD) and 1420 to 1478 (TPRS…SKCF). The span at 1429-1442 (ENSDDELPADDTSV) shows a compositional bias: acidic residues. The span at 1468–1478 (RSKSSSRSKCF) shows a compositional bias: basic residues.

This sequence belongs to the Fanconi anemia protein FANCD2 family. Homodimer; cannot be ubiquitinated and does not bind DNA. Part of a Fanci-Fancd2 heterodimeric complex that binds and scans dsDNA for DNA damage. Interacts with Fancl (via C-terminus). In terms of processing, monoubiquitinated by Fancl in response to ionising radiation.

Its subcellular location is the nucleus. Its function is as follows. Required for maintenance of chromosomal stability. Together with Fancl, and probably Fanci, involved in DNA repair of damage caused by agents that induce interstrand cross-links but not agents that cause double strand breaks. Required for S phase checkpoint activation in response to ionizing radiation induced DNA damage. This Drosophila melanogaster (Fruit fly) protein is Fanconi anemia group D2 protein homolog.